The chain runs to 293 residues: Protease HtpX homolog (293 aa).

2 helical membrane-spanning segments follow: residues 6-26 and 28-48; these read VAVM…LIGG and SGMV…YWNS. H130 serves as a coordination point for Zn(2+). The active site involves E131. H134 provides a ligand contact to Zn(2+). Helical transmembrane passes span 145-165 and 172-192; these read LTAT…FFGG and PLGA…AMMV. E201 contacts Zn(2+).

This sequence belongs to the peptidase M48B family. Requires Zn(2+) as cofactor.

It is found in the cell inner membrane. The polypeptide is Protease HtpX homolog (Rhodospirillum rubrum (strain ATCC 11170 / ATH 1.1.1 / DSM 467 / LMG 4362 / NCIMB 8255 / S1)).